The sequence spans 349 residues: DNA-directed RNA polymerase subunit Rpo1N (349 aa).

The interval 306–349 is disordered; the sequence is EDEGEEFAGEQATNLSESADDRMDRDRPSSHGAAPIDVPEVGDD. Basic and acidic residues predominate over residues 324–334; it reads ADDRMDRDRPS.

This sequence belongs to the RNA polymerase beta' chain family. In terms of assembly, part of the RNA polymerase complex.

It is found in the cytoplasm. The enzyme catalyses RNA(n) + a ribonucleoside 5'-triphosphate = RNA(n+1) + diphosphate. Its function is as follows. DNA-dependent RNA polymerase (RNAP) catalyzes the transcription of DNA into RNA using the four ribonucleoside triphosphates as substrates. Forms the clamp head domain. This is DNA-directed RNA polymerase subunit Rpo1N from Halococcus morrhuae (Micrococcus morrhuae).